The following is a 1112-amino-acid chain: Zinc finger protein 654 (1112 aa).

The tract at residues 482–514 (PSSSLKKRVDQQSVEEDQSTGETDPDDASVVQP) is disordered. The span at 494 to 508 (SVEEDQSTGETDPDD) shows a compositional bias: acidic residues. 5 consecutive C2H2-type zinc fingers follow at residues 566–588 (FACV…LKNH), 738–763 (FKCP…RTVH), 779–801 (GKCK…LNRH), 807–831 (YFCL…TKSH), and 836–860 (AQCS…EAQH). 2 disordered regions span residues 885–906 (FSNE…KYST) and 997–1018 (VESQ…NLTS). Composition is skewed to polar residues over residues 886-899 (SNEN…VSTS) and 1002-1018 (HSAL…NLTS). Residues serine 1107 and serine 1111 each carry the phosphoserine modification.

It belongs to the krueppel C2H2-type zinc-finger protein family.

It is found in the nucleus. Functionally, may be involved in transcriptional regulation. This Mus musculus (Mouse) protein is Zinc finger protein 654.